Consider the following 244-residue polypeptide: Cytochrome c1 (244 aa).

An N-terminal signal peptide occupies residues 1-19; sequence MRKLILATFLLLAPTALLA. Heme c is bound by residues cysteine 50, cysteine 53, and histidine 54. A helical membrane pass occupies residues 220-240; sequence YVLLFLGFLFILAYLLKKEYW.

As to quaternary structure, the main subunits of complex b-c1 are: cytochrome b, cytochrome c1 and the Rieske protein. In terms of processing, binds 1 heme c group covalently per subunit.

The protein resides in the cell membrane. Its function is as follows. Component of the ubiquinol-cytochrome c reductase complex (complex III or cytochrome b-c1 complex), which is a respiratory chain that generates an electrochemical potential coupled to ATP synthesis. c1 functions as an electron donor to cytochrome c. In Allochromatium vinosum (strain ATCC 17899 / DSM 180 / NBRC 103801 / NCIMB 10441 / D) (Chromatium vinosum), this protein is Cytochrome c1 (petC).